The sequence spans 352 residues: Endophilin-A1 (352 aa).

Residues 1 to 21 (MSVAGLKKQFHKATQKVSEKV) form a membrane-binding amphipathic helix region. A disordered region spans residues 1-27 (MSVAGLKKQFHKATQKVSEKVGGAEGT). A binds and tubulates liposomes region spans residues 1 to 125 (MSVAGLKKQF…EVGEAMRELS (125 aa)). A BAR domain is found at 18 to 249 (SEKVGGAEGT…LEERIRQASS (232 aa)). Residues 60 to 87 (PNPASRAKLSMINTMSKIRGQEKGPGYP) are required for dimerization upon membrane association. Residues 181–248 (EELRQALEKF…RLEERIRQAS (68 aa)) are a coiled coil. The span at 245–257 (RQASSQPRREYQP) shows a compositional bias: basic and acidic residues. A disordered region spans residues 245–289 (RQASSQPRREYQPKPRMSLEFPTGDSTQPNGGLSHTGTPKPSGVQ). Ser262 carries the phosphoserine modification. A compositionally biased stretch (polar residues) spans 268 to 283 (GDSTQPNGGLSHTGTP). The 60-residue stretch at 290 to 349 (MDQPCCRALYDFEPENEGELGFKEGDIITLTNQIDENWYEGMLHGHSGFFPINYVEILVA) folds into the SH3 domain. Position 299 is a phosphotyrosine (Tyr299).

The protein belongs to the endophilin family. In terms of assembly, monomer; in cytoplasm. Homodimer; when associated with membranes. Interacts with OPHN1. Interacts with SYNJ1. Interacts with DNM1. Interacts with MAP4K3; the interaction appears to regulate MAP4K3-mediated JNK activation. Interacts with PDCD6IP. Interacts with ATXN2. Interacts with ADAM9 and ADAM15 cytoplasmic tails. Interacts with BIN2. Interacts with TMEM108. Interacts with ADGRB2. As to expression, brain, mostly in frontal cortex. Expressed at high level in fetal cerebellum.

It localises to the cytoplasm. It is found in the membrane. The protein resides in the early endosome. Its subcellular location is the presynapse. Functionally, implicated in synaptic vesicle endocytosis. May recruit other proteins to membranes with high curvature. Required for BDNF-dependent dendrite outgrowth. Cooperates with SH3GL2 to mediate BDNF-NTRK2 early endocytic trafficking and signaling from early endosomes. In Homo sapiens (Human), this protein is Endophilin-A1 (SH3GL2).